The following is an 89-amino-acid chain: Myrmicitoxin(1)-Pr2a (89 aa).

The signal sequence occupies residues 1–23; sequence MEIPKLLYIAVIAIGLSGSLTCA. The propeptide occupies 24-61; that stretch reads TPLANPWADPEAEANPEAKAIAEATAEAIAEALAEPEP. Asn88 bears the Asparagine amide mark.

Belongs to the formicidae venom clade 1 family. In terms of tissue distribution, expressed by the venom gland.

It localises to the secreted. Its function is as follows. Vertebrate-selective toxin that causes pain by targeting voltage-gated sodium channels. The polypeptide is Myrmicitoxin(1)-Pr2a (Pogonomyrmex rugosus (Desert harvester ant)).